We begin with the raw amino-acid sequence, 138 residues long: Basic phospholipase A2 sistruxin B (138 aa).

An N-terminal signal peptide occupies residues 1–16 (MRALWIVAVLLVGVEG). 7 disulfides stabilise this stretch: Cys42–Cys131, Cys44–Cys60, Cys59–Cys111, Cys65–Cys138, Cys66–Cys104, Cys73–Cys97, and Cys91–Cys102. Residues Tyr43, Gly45, and Gly47 each coordinate Ca(2+). His63 is an active-site residue. Residue Asp64 participates in Ca(2+) binding. Asp105 is an active-site residue.

Heterodimer of an acidic subunit and a basic chain. The acidic subunit is non-toxic, without enzymatic activity and comprises 3 peptides that are cross-linked by 7 disulfide bridges. The basic subunit is toxic, has phospholipase A2 activity and is composed of a single chain. Ca(2+) is required as a cofactor. Expressed by the venom gland.

Its subcellular location is the secreted. It catalyses the reaction a 1,2-diacyl-sn-glycero-3-phosphocholine + H2O = a 1-acyl-sn-glycero-3-phosphocholine + a fatty acid + H(+). In terms of biological role, snake venom phospholipase A2 (PLA2) that shows presynaptic neurotoxicity. PLA2 catalyzes the calcium-dependent hydrolysis of the 2-acyl groups in 3-sn-phosphoglycerides. The polypeptide is Basic phospholipase A2 sistruxin B (Sistrurus tergeminus (Western massasauga)).